The primary structure comprises 674 residues: NADH-ubiquinone oxidoreductase chain 5 (674 aa).

Transmembrane regions (helical) follow at residues 27-47, 81-101, 113-133, 135-155, 173-193, 200-220, 242-262, 275-295, 301-323, 325-345, 363-383, 410-430, 453-473, 514-534, 556-576, 616-636, and 639-659; these read GAHI…IVAF, LTVS…IFSV, FFAY…GDNY, IMFV…NFWF, VGDM…GNLD, IAPF…LLAA, TPVS…YLLL, LIVI…TGLL, RVIA…LSQY, VALF…LAAG, LIGF…SLIA, VAYW…LRLI, TIVM…GYVA, AIGT…LPVF, YVDV…GYVI, ALYL…PVLL, and ALIN…IPYI.

Belongs to the complex I subunit 5 family.

It is found in the mitochondrion inner membrane. The catalysed reaction is a ubiquinone + NADH + 5 H(+)(in) = a ubiquinol + NAD(+) + 4 H(+)(out). In terms of biological role, core subunit of the mitochondrial membrane respiratory chain NADH dehydrogenase (Complex I) that is believed to belong to the minimal assembly required for catalysis. Complex I functions in the transfer of electrons from NADH to the respiratory chain. The immediate electron acceptor for the enzyme is believed to be ubiquinone. This Mycosarcoma maydis (Corn smut fungus) protein is NADH-ubiquinone oxidoreductase chain 5 (ND5).